The following is a 318-amino-acid chain: tRNA U34 carboxymethyltransferase (318 aa).

Carboxy-S-adenosyl-L-methionine-binding residues include lysine 88, tryptophan 102, lysine 107, glycine 126, methionine 192, tyrosine 196, and arginine 311.

The protein belongs to the class I-like SAM-binding methyltransferase superfamily. CmoB family. Homotetramer.

The enzyme catalyses carboxy-S-adenosyl-L-methionine + 5-hydroxyuridine(34) in tRNA = 5-carboxymethoxyuridine(34) in tRNA + S-adenosyl-L-homocysteine + H(+). In terms of biological role, catalyzes carboxymethyl transfer from carboxy-S-adenosyl-L-methionine (Cx-SAM) to 5-hydroxyuridine (ho5U) to form 5-carboxymethoxyuridine (cmo5U) at position 34 in tRNAs. This chain is tRNA U34 carboxymethyltransferase, found in Pseudomonas fluorescens (strain Pf0-1).